The primary structure comprises 252 residues: NAC domain-containing protein 23 (252 aa).

The NAC domain occupies 12 to 177 (MPPGFRFQPT…EMVLCRISNK (166 aa)). The DNA-binding element occupies 110–183 (TAVKRRFVFY…ISNKDLPKPP (74 aa)). Residues 225–252 (VDDAAAADDDPGDLDEEIDDSMQRNHGG) form a disordered region. The segment covering 229–244 (AAADDDPGDLDEEIDD) has biased composition (acidic residues).

In terms of assembly, forms heterodimers with NAC26. As to expression, expressed in stems and panicles. Expressed in developing seeds.

It is found in the nucleus. The protein localises to the cytoplasm. Functionally, transcription factor involved in the regulation of seed size. Possesses transactivation activity in yeast. In Oryza sativa subsp. indica (Rice), this protein is NAC domain-containing protein 23.